The chain runs to 232 residues: Uracil-DNA glycosylase (232 aa).

The Proton acceptor role is filled by Asp-64.

This sequence belongs to the uracil-DNA glycosylase (UDG) superfamily. UNG family.

Its subcellular location is the cytoplasm. It carries out the reaction Hydrolyzes single-stranded DNA or mismatched double-stranded DNA and polynucleotides, releasing free uracil.. Its function is as follows. Excises uracil residues from the DNA which can arise as a result of misincorporation of dUMP residues by DNA polymerase or due to deamination of cytosine. The chain is Uracil-DNA glycosylase from Shouchella clausii (strain KSM-K16) (Alkalihalobacillus clausii).